The sequence spans 604 residues: uncharacterized protein (604 aa).

An ABC transmembrane type-1 domain is found at 45-329; that stretch reads LPLSFLTVLI…LGQVYNQLLM (285 aa). 6 helical membrane passes run 49-69, 82-102, 162-182, 184-204, 273-293, and 297-317; these read FLTV…IGVY, LLIQ…AANV, VINL…LFTL, PELT…STSL, LVEM…ATLI, and TITI…WEPI. One can recognise an ABC transporter domain in the interval 363–597; sequence ISFEEVEFSY…GGIYAGLVKA (235 aa). 396–403 contacts ATP; that stretch reads GHTGSGKT.

It belongs to the ABC transporter superfamily.

The protein resides in the cell membrane. This is an uncharacterized protein from Bacillus subtilis (strain 168).